We begin with the raw amino-acid sequence, 97 residues long: uncharacterized protein (97 aa).

This is an uncharacterized protein from Escherichia coli O157:H7.